A 431-amino-acid polypeptide reads, in one-letter code: MTIKTETEKPALTYSKTRGLVELITAFMKQRRMGLNDFIQKLATNSYACKHPEVQSILNLTPPQDPELMNSNPSPPPSPSQQINLGPSSNPSAKPSDFHFLKVIGKGSFGKVLLARHRTDDQFYAVKVLQKKAILKKKEEKHIMSERNVLLKNVKHPFLVGLHYSFQTADKLYFVLDYINGGELFYHLQRERCFLEPRARFYSAEIASALGYLHSLNIVYRDLKPENILLDSQGHIILTDFGLCKENIEPNGTTSTFCGTPEYLAPEVLHKQPYDRTVDWWCLGAVLYEMLYGLPPFYSRNTAEMYDNILNKPLQLKPNISNAARHLLEGLLQKDRTKRLGCKDDFTEIKNHVFFSPINWDDLNAKKMTPPFNPNVTGPNDLRHFDPEFTDEPVPSSIGCSPDCALATASIKEAAEAFVGFSYAPSMDSYL.

The segment at 58–93 (LNLTPPQDPELMNSNPSPPPSPSQQINLGPSSNPSA) is disordered. Residues 81 to 93 (QQINLGPSSNPSA) are compositionally biased toward polar residues. The region spanning 98 to 355 (FHFLKVIGKG…FTEIKNHVFF (258 aa)) is the Protein kinase domain. Residues 104–112 (IGKGSFGKV) and Lys-127 contribute to the ATP site. Catalysis depends on Asp-222, which acts as the Proton acceptor. One can recognise an AGC-kinase C-terminal domain in the interval 356-431 (SPINWDDLNA…SYAPSMDSYL (76 aa)).

The protein belongs to the protein kinase superfamily. AGC Ser/Thr protein kinase family.

The protein localises to the cytoplasm. Its subcellular location is the nucleus. It localises to the endoplasmic reticulum. The catalysed reaction is L-seryl-[protein] + ATP = O-phospho-L-seryl-[protein] + ADP + H(+). It carries out the reaction L-threonyl-[protein] + ATP = O-phospho-L-threonyl-[protein] + ADP + H(+). Protein kinase that may play an important role in cellular stress response. May be involved in the regulation of processes such as cell survival, neuronal excitability and renal sodium excretion. In Fundulus heteroclitus (Killifish), this protein is Serine/threonine-protein kinase Sgk1 (sgk1).